The sequence spans 807 residues: Glycerol-3-phosphate acyltransferase (807 aa).

The HXXXXD motif signature appears at 308 to 313; sequence CHRSHM.

This sequence belongs to the GPAT/DAPAT family.

The protein localises to the cell inner membrane. It carries out the reaction sn-glycerol 3-phosphate + an acyl-CoA = a 1-acyl-sn-glycero-3-phosphate + CoA. It functions in the pathway phospholipid metabolism; CDP-diacylglycerol biosynthesis; CDP-diacylglycerol from sn-glycerol 3-phosphate: step 1/3. This chain is Glycerol-3-phosphate acyltransferase, found in Shewanella frigidimarina (strain NCIMB 400).